A 164-amino-acid chain; its full sequence is MD-2-related lipid-recognition protein 3 (164 aa).

An N-terminal signal peptide occupies residues 1–24; that stretch reads MAMSHVQPMLLLLVSLFFLPALRG.

As to quaternary structure, interacts with RUB1/NEDD8. Post-translationally, neddylated. Ubiquitinated.

It localises to the vacuole. The protein localises to the endoplasmic reticulum. Functionally, may be involved in herbivory-mediated responses. May play a role in herbivory-associated molecular pattern (HAMP) recognition. May function is jasmonate (JA) signaling in response to HAMP. May play a role in defense response against the pathogens Altenaria brassicicola and Pseudomonas syringae. The sequence is that of MD-2-related lipid-recognition protein 3 from Arabidopsis thaliana (Mouse-ear cress).